A 171-amino-acid chain; its full sequence is Lipoprotein signal peptidase (171 aa).

4 consecutive transmembrane segments (helical) span residues 12 to 32, 42 to 62, 70 to 90, and 96 to 116; these read LAWL…KLYF, IVVI…AAFS, WQRW…VVWL, and NETW…GNLY. Residues aspartate 126 and aspartate 145 contribute to the active site. Residues 137 to 157 traverse the membrane as a helical segment; sequence YFPAFNVADSAITVGAVMLAL.

The protein belongs to the peptidase A8 family.

It is found in the cell inner membrane. The catalysed reaction is Release of signal peptides from bacterial membrane prolipoproteins. Hydrolyzes -Xaa-Yaa-Zaa-|-(S,diacylglyceryl)Cys-, in which Xaa is hydrophobic (preferably Leu), and Yaa (Ala or Ser) and Zaa (Gly or Ala) have small, neutral side chains.. It participates in protein modification; lipoprotein biosynthesis (signal peptide cleavage). In terms of biological role, this protein specifically catalyzes the removal of signal peptides from prolipoproteins. The polypeptide is Lipoprotein signal peptidase (Pseudomonas putida (strain ATCC 47054 / DSM 6125 / CFBP 8728 / NCIMB 11950 / KT2440)).